The primary structure comprises 202 residues: MPKLGMQPIRRRQLIQATLETIDDVGLADATIARIAKRAGVSAGIISHYFGGKDGLLESAMRQILWDLGDAVARRRAQGVESPREHIRAIIDGNFDRSQVNKTVMKTWLAFWSVSMHRPDLQRLQRVNDRWLYSNLCHHFRRCLPRPEAQQAARGLAAMIDGLWLRGALAPQGIDVDRARQLAYDYVEEQLARSTSHAPTDA.

One can recognise an HTH tetR-type domain in the interval Pro8–Leu68. The segment at residues Thr31 to Phe50 is a DNA-binding region (H-T-H motif).

It participates in amine and polyamine biosynthesis; betaine biosynthesis via choline pathway [regulation]. Its function is as follows. Repressor involved in the biosynthesis of the osmoprotectant glycine betaine. It represses transcription of the choline transporter BetT and the genes of BetAB involved in the synthesis of glycine betaine. In Chromohalobacter salexigens (strain ATCC BAA-138 / DSM 3043 / CIP 106854 / NCIMB 13768 / 1H11), this protein is HTH-type transcriptional regulator BetI 1.